The chain runs to 635 residues: Threonine--tRNA ligase (635 aa).

Positions 1–61 (MIQITLPDAS…EKDSALSIIT (61 aa)) constitute a TGS domain. Residues 242-533 (DHRKLGKELD…LIEEHAGALP (292 aa)) are catalytic. Zn(2+)-binding residues include cysteine 333, histidine 384, and histidine 510.

It belongs to the class-II aminoacyl-tRNA synthetase family. In terms of assembly, homodimer. It depends on Zn(2+) as a cofactor.

Its subcellular location is the cytoplasm. It catalyses the reaction tRNA(Thr) + L-threonine + ATP = L-threonyl-tRNA(Thr) + AMP + diphosphate + H(+). In terms of biological role, catalyzes the attachment of threonine to tRNA(Thr) in a two-step reaction: L-threonine is first activated by ATP to form Thr-AMP and then transferred to the acceptor end of tRNA(Thr). Also edits incorrectly charged L-seryl-tRNA(Thr). This is Threonine--tRNA ligase from Polaromonas sp. (strain JS666 / ATCC BAA-500).